A 375-amino-acid chain; its full sequence is Cobalt-precorrin-5B C(1)-methyltransferase (375 aa).

The protein belongs to the CbiD family.

It carries out the reaction Co-precorrin-5B + S-adenosyl-L-methionine = Co-precorrin-6A + S-adenosyl-L-homocysteine. The protein operates within cofactor biosynthesis; adenosylcobalamin biosynthesis; cob(II)yrinate a,c-diamide from sirohydrochlorin (anaerobic route): step 6/10. Catalyzes the methylation of C-1 in cobalt-precorrin-5B to form cobalt-precorrin-6A. The sequence is that of Cobalt-precorrin-5B C(1)-methyltransferase from Paracidovorax citrulli (strain AAC00-1) (Acidovorax citrulli).